The primary structure comprises 447 residues: Cytochrome P450 BJ-4 (447 aa).

Cys392 serves as a coordination point for heme.

This sequence belongs to the cytochrome P450 family. Heme is required as a cofactor.

Functionally, cytochromes P450 are a group of heme-thiolate monooxygenases. They oxidize a variety of structurally unrelated compounds, including steroids, fatty acids, and xenobiotics. This chain is Cytochrome P450 BJ-4 (cyp117), found in Bradyrhizobium diazoefficiens (strain JCM 10833 / BCRC 13528 / IAM 13628 / NBRC 14792 / USDA 110).